Here is a 20-residue protein sequence, read N- to C-terminus: Cytolysin tenebrosin-A (20 aa).

The plays an important role in the hemolytic activity stretch occupies residues 3–12 (AVAGAVIEGA). The tract at residues 11–20 (GATLTFEVLQ) is N-terminal region.

It belongs to the actinoporin family. Sea anemone subfamily. As to quaternary structure, octamer or nonamer in membranes. Monomer in the soluble state.

The protein resides in the secreted. It is found in the nematocyst. It localises to the target cell membrane. Pore-forming protein that forms cations-selective hydrophilic pores of around 1 nm and causes cardiac stimulation and cytolysis. Pore formation is a multi-step process that involves specific recognition of membrane sphingomyelin (but neither cholesterol nor phosphatidylcholine) using aromatic rich region and adjacent phosphocholine (POC) binding site, firm binding to the membrane (mainly driven by hydrophobic interactions) accompanied by the transfer of the N-terminal region to the lipid-water interface and finally pore formation after oligomerization of monomers. The chain is Cytolysin tenebrosin-A from Actinia tenebrosa (Australian red waratah sea anemone).